The primary structure comprises 496 residues: Fibronectin type III and SPRY domain-containing protein 1 (496 aa).

The stretch at 4-99 (QKEALRKIIT…ALESSEELLE (96 aa)) forms a coiled coil. One can recognise a COS domain in the interval 105–162 (LLATDSKDFPQAAKQIKDGVTMAPAFRLSLKAKVSDNMSHLMVDFAQERRMLQALTFL). One can recognise a Fibronectin type-III domain in the interval 164-268 (VPSAPVIDLT…EPVTLETPAF (105 aa)). The region spanning 268 to 477 (FMFRLDASTS…VTTGLQVPSS (210 aa)) is the B30.2/SPRY domain. The tract at residues 301 to 336 (KAREKDGKGRTASPVNSPARGTPSPKRMPSGRGGRD) is disordered. 2 positions are modified to omega-N-methylarginine: Arg-310 and Arg-320.

In terms of assembly, oligomerization is required for binding to microtubules.

The protein localises to the cytoplasm. It localises to the cytoskeleton. Its subcellular location is the microtubule organizing center. It is found in the centrosome. The protein resides in the nucleus. The protein localises to the cleavage furrow. In terms of biological role, may be involved in microtubule organization and stabilization. This Bos taurus (Bovine) protein is Fibronectin type III and SPRY domain-containing protein 1 (FSD1).